An 80-amino-acid polypeptide reads, in one-letter code: Defensin-like protein 2 (80 aa).

An N-terminal signal peptide occupies residues 1-29 (MAKFASIIVLLFVALVVFAAFEEPTMVEA). Pyrrolidone carboxylic acid is present on Gln-30. Cystine bridges form between Cys-33–Cys-80, Cys-44–Cys-65, Cys-50–Cys-74, and Cys-54–Cys-76.

It belongs to the DEFL family.

It localises to the secreted. Possesses antifungal activity sensitive to inorganic cations. Induces potential changes in fungal membranes and increased K(+) efflux and Ca(2+) uptake. The polypeptide is Defensin-like protein 2 (AFP2) (Raphanus sativus (Radish)).